The following is a 115-amino-acid chain: Histidine decarboxylase proenzyme (115 aa).

S83 bears the Pyruvic acid (Ser) mark.

In terms of assembly, the proenzyme is a hexamer of identical pi chains; each pi chain monomer is cleaved to form a small (or beta) chain and a large (or alpha) chain by non-hydrolytic self-catalysis. Requires pyruvate as cofactor.

It carries out the reaction L-histidine + H(+) = histamine + CO2. The chain is Histidine decarboxylase proenzyme from Lentilactobacillus buchneri (Lactobacillus buchneri).